Consider the following 153-residue polypeptide: Heavy metal-associated isoprenylated plant protein 25 (153 aa).

The region spanning 24–88 (LQTVDVRVLI…IIHRTGKRAE (65 aa)) is the HMA domain. Positions 35 and 38 each coordinate a metal cation. Cysteine methyl ester is present on C150. A lipid anchor (S-farnesyl cysteine) is attached at C150. Residues 151–153 (VVM) constitute a propeptide, removed in mature form.

It belongs to the HIPP family. As to expression, expressed in roots, shoot apical meristem, trichomes and flower buds.

The protein resides in the membrane. Heavy-metal-binding protein. Binds cadmium. May be involved in cadmium transport and play a role in cadmium detoxification. The polypeptide is Heavy metal-associated isoprenylated plant protein 25 (Arabidopsis thaliana (Mouse-ear cress)).